The chain runs to 122 residues: MRHYEIVFIVHPDQSEQVPAMVERYKTMITEANGKIHRLEDWGRRQLAYPINKIHKAHYVLMNIETTPEVVGELETAFRFNDAVLRHLTIKTKHAVTEASPMLGGEKAKNLLVGAAEEAAAQ.

Belongs to the bacterial ribosomal protein bS6 family.

Functionally, binds together with bS18 to 16S ribosomal RNA. The sequence is that of Small ribosomal subunit protein bS6 from Neisseria gonorrhoeae (strain ATCC 700825 / FA 1090).